The chain runs to 609 residues: Alpha-fetoprotein (609 aa).

A signal peptide spans 1–18 (MKWVESIFLIFLLNFTES). 3 Albumin domains span residues 19–210 (RTLH…ATVT), 211–402 (KELR…EELQ), and 403–601 (KYIQ…KLIS). Residue His-22 participates in Cu(2+) binding. 8 disulfide bridges follow: Cys-99-Cys-114, Cys-113-Cys-124, Cys-148-Cys-193, Cys-192-Cys-201, Cys-224-Cys-270, Cys-269-Cys-277, Cys-289-Cys-303, and Cys-302-Cys-313. Phosphoserine; by FAM20C occurs at positions 111, 115, and 117. An N-linked (GlcNAc...) asparagine glycan is attached at Asn-251. Position 344 is a phosphoserine; by FAM20C (Ser-344). Disulfide bonds link Cys-384-Cys-393, Cys-416-Cys-462, Cys-461-Cys-472, Cys-485-Cys-501, Cys-500-Cys-511, Cys-538-Cys-583, and Cys-582-Cys-591. Residues Ser-444 and Ser-445 each carry the phosphoserine; by FAM20C modification.

This sequence belongs to the ALB/AFP/VDB family. In terms of assembly, dimeric and trimeric forms have been found in addition to the monomeric form. In terms of processing, independent studies suggest heterogeneity of the N-terminal sequence of the mature protein and of the cleavage site of the signal sequence. Post-translationally, sulfated. In terms of tissue distribution, plasma. Synthesized by the fetal liver and yolk sac.

The protein resides in the secreted. In terms of biological role, binds copper, nickel, and fatty acids as well as, and bilirubin less well than, serum albumin. Only a small percentage (less than 2%) of the human AFP shows estrogen-binding properties. The polypeptide is Alpha-fetoprotein (AFP) (Homo sapiens (Human)).